The chain runs to 139 residues: Superoxide dismutase [Cu-Zn] (139 aa).

Cys-6 carries S-palmitoyl cysteine lipidation. Positions 47 and 49 each coordinate Cu cation. Residues His-72, His-81, and Asp-84 each contribute to the Zn(2+) site. A Cu cation-binding site is contributed by His-114. Over residues 118-129 (DDLGKGGNDESL) the composition is skewed to basic and acidic residues. The tract at residues 118–139 (DDLGKGGNDESLKTGNAGGRMA) is disordered.

The protein belongs to the Cu-Zn superoxide dismutase family. Homodimer. Cu cation is required as a cofactor. Requires Zn(2+) as cofactor.

It localises to the cytoplasm. The protein resides in the nucleus. It carries out the reaction 2 superoxide + 2 H(+) = H2O2 + O2. Its function is as follows. Destroys radicals which are normally produced within the cells and which are toxic to biological systems. The sequence is that of Superoxide dismutase [Cu-Zn] (sod1) from Lampanyctus crocodilus (Jewel lanternfish).